The sequence spans 819 residues: Protein SCARECROW (819 aa).

4 disordered regions span residues 6 to 49 (LFNG…HSER), 65 to 136 (HNNN…INNN), 212 to 231 (SQNN…RNNT), and 393 to 420 (PLST…TTTT). Residues 15-33 (TTPDETNNNSTSNSSNIST) show a composition bias toward low complexity. Residues 79 to 98 (RTNNTSSLNCSLPATTQKGV) show a composition bias toward polar residues. Low complexity predominate over residues 99-136 (TTTTTTTLASSGNNNNNNNNNNNYHYHNNNNNSIINNN). Residues 418 to 448 (TTTSAELALARKKKEEIKEQKKKDEEGLHLL) adopt a coiled-coil conformation. The region spanning 438–806 (KKKDEEGLHL…LCLLTASAWR (369 aa)) is the GRAS domain. Residues 445–507 (LHLLTLLLQC…RLVSSCLGIY (63 aa)) are leucine repeat I (LRI). The LxCxE motif motif lies at 452–456 (LQCAE). The tract at residues 526 to 591 (FQVFNGISPF…GGPPYVRLTG (66 aa)) is VHIID. Positions 557 to 561 (VHIID) match the VHIID motif. Positions 601–633 (ATGKRLSDFANKLGLPFEFFPVAEKVGNIDVEK) are leucine repeat II (LRII). A PFYRE region spans residues 642-729 (VAVHWLQHSL…QQLLSREIRN (88 aa)). Positions 732 to 806 (AVGGPSRSGE…LCLLTASAWR (75 aa)) are SAW.

This sequence belongs to the GRAS family. In terms of tissue distribution, expressed in shoot apical meristem, leaf primordia, between the cortex and the differentiating vessels in lower shoots and in root endodermis.

Its subcellular location is the nucleus. Functionally, putative transcription factor involved in asymmetric cell division. The chain is Protein SCARECROW (SCR) from Pisum sativum (Garden pea).